We begin with the raw amino-acid sequence, 507 residues long: Maturase K (507 aa).

The protein belongs to the intron maturase 2 family. MatK subfamily.

Its subcellular location is the plastid. The protein localises to the chloroplast. Functionally, usually encoded in the trnK tRNA gene intron. Probably assists in splicing its own and other chloroplast group II introns. This chain is Maturase K, found in Browningia hertlingiana (Cactus).